Reading from the N-terminus, the 312-residue chain is Taste receptor type 2 member 7 (312 aa).

The Extracellular segment spans residues 1 to 9 (MTYETDTTL). Residues 10–30 (MLVAVGEALVGILGNAFIALV) form a helical membrane-spanning segment. Over 31–49 (NFMGWMKNRKIASIDLILS) the chain is Cytoplasmic. The helical transmembrane segment at 50–70 (SVAMSRICLQCIILLDCIILV) threads the bilayer. Topologically, residues 71 to 101 (QYPDTYNRGKEMRTVDFFWTLTNHLSVWFAT) are extracellular. A helical transmembrane segment spans residues 102-122 (CLSIFYLFKIANFFHPLFLWI). The Cytoplasmic portion of the chain corresponds to 123-128 (KWRIDK). A helical membrane pass occupies residues 129–149 (LILRTLLACVIISLCFSLPVT). The Extracellular segment spans residues 150-187 (ENLSDDFRRCVKTKERINSTLRCKVNKAGHASVKVNLN). N-linked (GlcNAc...) asparagine glycans are attached at residues Asn151 and Asn167. The chain crosses the membrane as a helical span at residues 188–208 (LVMLFPFSVSLVSFLLLILSL). At 209 to 235 (WRHTRQIQLSVTGYKDPSTTAHVKAMK) the chain is on the cytoplasmic side. A helical membrane pass occupies residues 236-256 (AVISFLALFVVYCLAFLIATS). At 257 to 266 (SYFMPESELA) the chain is on the extracellular side. The helical transmembrane segment at 267-287 (VIWGELIALIYPSSHSFILIL) threads the bilayer. Residues 288-312 (GSSKLKQASVRVLCRVKTMLKGKKY) are Cytoplasmic-facing.

It belongs to the G-protein coupled receptor T2R family. As to expression, expressed in subsets of taste receptor cells of the tongue and palate epithelium and exclusively in gustducin-positive cells. Expressed in 15% taste bud cells in circumvallate and foliate papillae but only in 2% in fungiform papillae. Expressed in gastric and duodenal tissues.

It is found in the membrane. Gustducin-coupled receptor implicated in the perception of bitter compounds in the oral cavity and the gastrointestinal tract. Signals through PLCB2 and the calcium-regulated cation channel TRPM5. The polypeptide is Taste receptor type 2 member 7 (Tas2r7) (Mus musculus (Mouse)).